Reading from the N-terminus, the 441-residue chain is GTPase Der (441 aa).

EngA-type G domains lie at Pro4–Ile169 and Ile178–Ala353. Residues Gly10–Ser17, Asp57–Ile61, Asn120–Asp123, Gly184–Ser191, Asp231–Ile235, and Asn296–Asp299 each bind GTP. The KH-like domain maps to Phe354 to Glu438.

It belongs to the TRAFAC class TrmE-Era-EngA-EngB-Septin-like GTPase superfamily. EngA (Der) GTPase family. Associates with the 50S ribosomal subunit.

Its function is as follows. GTPase that plays an essential role in the late steps of ribosome biogenesis. This chain is GTPase Der, found in Ruminiclostridium cellulolyticum (strain ATCC 35319 / DSM 5812 / JCM 6584 / H10) (Clostridium cellulolyticum).